A 263-amino-acid chain; its full sequence is Acetylglutamate kinase (263 aa).

Residues 48-49 (GG), Arg70, and Asn162 each bind substrate.

It belongs to the acetylglutamate kinase family. ArgB subfamily.

The protein localises to the cytoplasm. It carries out the reaction N-acetyl-L-glutamate + ATP = N-acetyl-L-glutamyl 5-phosphate + ADP. The protein operates within amino-acid biosynthesis; L-arginine biosynthesis; N(2)-acetyl-L-ornithine from L-glutamate: step 2/4. In terms of biological role, catalyzes the ATP-dependent phosphorylation of N-acetyl-L-glutamate. The chain is Acetylglutamate kinase from Vibrio vulnificus (strain CMCP6).